The sequence spans 250 residues: Methionine aminopeptidase (250 aa).

H77 lines the substrate pocket. The a divalent metal cation site is built by D95, D106, and H169. A substrate-binding site is contributed by H176. A divalent metal cation-binding residues include E202 and E233.

The protein belongs to the peptidase M24A family. Methionine aminopeptidase type 1 subfamily. In terms of assembly, monomer. Requires Co(2+) as cofactor. Zn(2+) serves as cofactor. Mn(2+) is required as a cofactor. The cofactor is Fe(2+).

It catalyses the reaction Release of N-terminal amino acids, preferentially methionine, from peptides and arylamides.. Its function is as follows. Removes the N-terminal methionine from nascent proteins. The N-terminal methionine is often cleaved when the second residue in the primary sequence is small and uncharged (Met-Ala-, Cys, Gly, Pro, Ser, Thr, or Val). Requires deformylation of the N(alpha)-formylated initiator methionine before it can be hydrolyzed. The polypeptide is Methionine aminopeptidase (Clostridium acetobutylicum (strain ATCC 824 / DSM 792 / JCM 1419 / IAM 19013 / LMG 5710 / NBRC 13948 / NRRL B-527 / VKM B-1787 / 2291 / W)).